Here is a 243-residue protein sequence, read N- to C-terminus: HTH-type transcriptional regulator MlrA (243 aa).

Residues 3–72 enclose the HTH merR-type domain; the sequence is LYTIGEVALL…VSKVKVLLSS (70 aa). A DNA-binding region (H-T-H motif) is located at residues 6–25; the sequence is IGEVALLCDINPVTLRAWQR.

Transcriptional activator of csgD, which is required for production of the curli (AgF). This Salmonella typhimurium (strain SL1344) protein is HTH-type transcriptional regulator MlrA.